We begin with the raw amino-acid sequence, 405 residues long: PP2A regulatory subunit TAP46 (405 aa).

Disordered stretches follow at residues 159-189 (ERRG…SEEE) and 352-405 (ATTS…TPCG). A compositionally biased stretch (polar residues) spans 165–174 (TKASALSTPV). Acidic residues-rich tracts occupy residues 176–189 (SGED…SEEE) and 367–377 (EDEEDDDEDEE). A compositionally biased stretch (basic and acidic residues) spans 378-393 (AVMKARAFDDWKDDNP).

This sequence belongs to the IGBP1/TAP42 family. As to quaternary structure, interacts with the 36 kDa catalytic subunit (subunit C) of PP2A. Interacts with PP2A1 and PP2A2. Interacts with PP2A3, PPX1 and FYPP1. Interacts with FYPP3 and ABI5. Interacts with ATPK1/S6K1 and ATPK2/S6K2. Interacts with TIP41L. Post-translationally, phosphorylated by TOR kinase in vitro. As to expression, ubiquitous. Highly expressed in seed, and particularly in the embryo.

Involved in the positive regulation of the TOR signaling pathway. Acts as a negative regulator of PP2A catalytic activity. Plays a positive role in the ABA-regulated inhibition of germination, probably throught its interaction with ABI5. This is PP2A regulatory subunit TAP46 from Arabidopsis thaliana (Mouse-ear cress).